The chain runs to 202 residues: MSKPPPKPAKPGQVKVFRALYTFEPRTPDELYFEEGDIIYISDMSDTNWWKGTCKGRTGLIPSNYVAEQAESIDNPLHEAAKRGNLSWLRECLDNQVGVNGLDKAGNTALYWACHGGHKDIVDVLFTQANLELNQQNKLGDTALHAAAWKGYADIVEMLLAKGARTDLKNNEKKLALDMATNAACASLLKKKQTAGTARTFK.

Positions 12–71 (GQVKVFRALYTFEPRTPDELYFEEGDIIYISDMSDTNWWKGTCKGRTGLIPSNYVAEQAE) constitute an SH3 domain. ANK repeat units lie at residues 72–101 (SIDN…GVNG), 105–135 (AGNT…ELNQ), and 139–168 (LGDT…RTDL).

The protein localises to the cytoplasm. Induces bone resorption, acting probably through a signaling cascade which results in the secretion of factor(s) enhancing osteoclast formation and activity. The polypeptide is Osteoclast-stimulating factor 1 (OSTF1) (Gallus gallus (Chicken)).